An 87-amino-acid chain; its full sequence is Small ribosomal subunit protein uS15c (87 aa).

Belongs to the universal ribosomal protein uS15 family. Part of the 30S ribosomal subunit.

It is found in the plastid. The protein localises to the chloroplast. The sequence is that of Small ribosomal subunit protein uS15c (rps15) from Solanum bulbocastanum (Wild potato).